Consider the following 244-residue polypeptide: Small ribosomal subunit protein uS3 (244 aa).

The KH type-2 domain occupies 39-107 (VREMLRKKLA…PAHINVTEVR (69 aa)). The segment at 213–244 (VGQEKQDDSPRNDRNDRGDRGDRPSRPAREAR) is disordered. Over residues 216 to 244 (EKQDDSPRNDRNDRGDRGDRPSRPAREAR) the composition is skewed to basic and acidic residues.

Belongs to the universal ribosomal protein uS3 family. As to quaternary structure, part of the 30S ribosomal subunit. Forms a tight complex with proteins S10 and S14.

Functionally, binds the lower part of the 30S subunit head. Binds mRNA in the 70S ribosome, positioning it for translation. The protein is Small ribosomal subunit protein uS3 of Xanthomonas euvesicatoria pv. vesicatoria (strain 85-10) (Xanthomonas campestris pv. vesicatoria).